The following is a 435-amino-acid chain: Xylose isomerase (435 aa).

Catalysis depends on residues H100 and D103. 7 residues coordinate Mg(2+): E231, E267, H270, D295, D306, D308, and D338.

The protein belongs to the xylose isomerase family. In terms of assembly, homotetramer. It depends on Mg(2+) as a cofactor.

The protein resides in the cytoplasm. The catalysed reaction is alpha-D-xylose = alpha-D-xylulofuranose. In Brucella suis biovar 1 (strain 1330), this protein is Xylose isomerase.